The following is a 287-amino-acid chain: MVTVNPSQAHCLPMKMSLPGFNTLPHTATTIPVSIRSNRTMSFFEDPTKKVRKPYTITKSRENWTEQEHDKFLEALHLFDRDWKKIKAFVGSKTVIQIRSHAQKYFLKVQKNGTKEHLPPPRPKRKANHPYPQKAPKFTLSSSNALFQHDYLYNTNSHPVISTTRKHGLVHCDVSIPSSVIKEEFGVSENCCSTSSSRDKQRTRIVTETNDQESCGKPHRVAPNFAEVYNFIGSVFDPKTTGHVKRLKEMDPINLETVLLLMKNLSVNLTSPEFDEQRKLISSYNAS.

Positions 56–110 (TITKSRENWTEQEHDKFLEALHLFDRDWKKIKAFVGSKTVIQIRSHAQKYFLKVQ) constitute an HTH myb-type domain. The segment at residues 83–106 (WKKIKAFVGSKTVIQIRSHAQKYF) is a DNA-binding region (H-T-H motif). The interval 111 to 135 (KNGTKEHLPPPRPKRKANHPYPQKA) is disordered.

It localises to the nucleus. In terms of biological role, probable transcription factor. The sequence is that of Protein REVEILLE 3 (RVE3) from Arabidopsis thaliana (Mouse-ear cress).